Here is a 689-residue protein sequence, read N- to C-terminus: Glycine--tRNA ligase beta subunit (689 aa).

It belongs to the class-II aminoacyl-tRNA synthetase family. As to quaternary structure, tetramer of two alpha and two beta subunits.

It is found in the cytoplasm. The enzyme catalyses tRNA(Gly) + glycine + ATP = glycyl-tRNA(Gly) + AMP + diphosphate. The chain is Glycine--tRNA ligase beta subunit from Escherichia coli O139:H28 (strain E24377A / ETEC).